We begin with the raw amino-acid sequence, 150 residues long: Actin-depolymerizing factor 3 (150 aa).

The ADF-H domain occupies 7-150 (GVAVSEECKA…TLDVLKDHTS (144 aa)).

It belongs to the actin-binding proteins ADF family.

Actin-depolymerizing protein. Severs actin filaments (F-actin) and binds to actin monomers. This chain is Actin-depolymerizing factor 3 (ADF3), found in Oryza sativa subsp. japonica (Rice).